The following is a 261-amino-acid chain: MEDLAKFLFGVSGNVIALFLFLSPVPTFWRIIRRKSTEDFSGVPYNMTLINCLLSAWYGLPFVSPNNILVSTINGAGAVIETAYVVVFLVFASTHKTRLRTLGLAAAVASVFAAVALVSLLALHGQHRKLLCGVAATVCSICMYASPLSIMRLVIKTKSVEYMPFLLSLAVFLCGTSWFIYGLLGRDPFVTIPNGCGSFLGAVQLVLYAIYRNNKGAGGGSGGKQAGDDDVEMAEGRNNKVADGGAAEDDSTAGGKAGTEV.

Residues 1-6 lie on the Extracellular side of the membrane; it reads MEDLAK. Residues 7-27 traverse the membrane as a helical segment; the sequence is FLFGVSGNVIALFLFLSPVPT. One can recognise a MtN3/slv 1 domain in the interval 7-95; it reads FLFGVSGNVI…VVFLVFASTH (89 aa). Topologically, residues 28-42 are cytoplasmic; sequence FWRIIRRKSTEDFSG. The chain crosses the membrane as a helical span at residues 43–63; it reads VPYNMTLINCLLSAWYGLPFV. Topologically, residues 64-71 are extracellular; sequence SPNNILVS. The chain crosses the membrane as a helical span at residues 72–92; that stretch reads TINGAGAVIETAYVVVFLVFA. Topologically, residues 93–101 are cytoplasmic; it reads STHKTRLRT. A helical transmembrane segment spans residues 102 to 122; sequence LGLAAAVASVFAAVALVSLLA. The Extracellular portion of the chain corresponds to 123-129; it reads LHGQHRK. Residues 130-150 traverse the membrane as a helical segment; that stretch reads LLCGVAATVCSICMYASPLSI. The region spanning 133-215 is the MtN3/slv 2 domain; it reads GVAATVCSIC…VLYAIYRNNK (83 aa). Residues 151–164 lie on the Cytoplasmic side of the membrane; it reads MRLVIKTKSVEYMP. A helical membrane pass occupies residues 165 to 185; sequence FLLSLAVFLCGTSWFIYGLLG. Residues 186-189 are Extracellular-facing; that stretch reads RDPF. A helical membrane pass occupies residues 190-210; sequence VTIPNGCGSFLGAVQLVLYAI. Over 211 to 261 the chain is Cytoplasmic; it reads YRNNKGAGGGSGGKQAGDDDVEMAEGRNNKVADGGAAEDDSTAGGKAGTEV. A disordered region spans residues 218-261; it reads GGGSGGKQAGDDDVEMAEGRNNKVADGGAAEDDSTAGGKAGTEV.

Belongs to the SWEET sugar transporter family. Forms homodimers.

It localises to the cell membrane. The catalysed reaction is D-glucose(out) = D-glucose(in). It catalyses the reaction D-galactose(in) = D-galactose(out). Its function is as follows. Mediates transport of sugars across the plasma membrane. Can transport glucose and galactose, but not fructose, mannose and sucrose. In Oryza sativa subsp. indica (Rice), this protein is Bidirectional sugar transporter SWEET1b (SWEET1B).